Reading from the N-terminus, the 251-residue chain is tRNA (guanine-N(1)-)-methyltransferase (251 aa).

S-adenosyl-L-methionine-binding positions include glycine 113 and 133-138 (MGDYVL).

The protein belongs to the RNA methyltransferase TrmD family. As to quaternary structure, homodimer.

Its subcellular location is the cytoplasm. The catalysed reaction is guanosine(37) in tRNA + S-adenosyl-L-methionine = N(1)-methylguanosine(37) in tRNA + S-adenosyl-L-homocysteine + H(+). In terms of biological role, specifically methylates guanosine-37 in various tRNAs. The polypeptide is tRNA (guanine-N(1)-)-methyltransferase (Sodalis glossinidius (strain morsitans)).